Here is a 317-residue protein sequence, read N- to C-terminus: Adenine deaminase (317 aa).

3 residues coordinate Zn(2+): histidine 14, histidine 16, and histidine 194. Glutamate 197 functions as the Proton donor in the catalytic mechanism. Aspartate 275 contributes to the Zn(2+) binding site. Aspartate 276 is a substrate binding site.

This sequence belongs to the metallo-dependent hydrolases superfamily. Adenosine and AMP deaminases family. Adenine deaminase type 2 subfamily. The cofactor is Zn(2+).

The enzyme catalyses adenine + H2O + H(+) = hypoxanthine + NH4(+). Catalyzes the hydrolytic deamination of adenine to hypoxanthine. Plays an important role in the purine salvage pathway and in nitrogen catabolism. This is Adenine deaminase from Bordetella bronchiseptica (strain ATCC BAA-588 / NCTC 13252 / RB50) (Alcaligenes bronchisepticus).